The chain runs to 673 residues: G-protein-signaling modulator 1 (673 aa).

Positions 1–507 (MASPAPPVAE…DLLSKFQSSR (507 aa)) are mediates association with membranes. TPR repeat units follow at residues 28 to 61 (CLELALEGERLCKAGDFKAGVAFFEAAVQVGTED), 66 to 99 (SAIYSQLGNAYFYLKEYARALQFHKHDLLLARTI), 106 to 139 (AKASGNLGNTLKVLGRFDEAIVCCQRHLDIAQEQ), 146 to 178 (ARALYNIGNVYHAKGKQLSWNAAQDPGHLPPDV), 180 to 199 (ETLHRASEFYERNLSLVKEL), 206 to 239 (GRAYGNLGNTHYLLGNFTEATTFHKERLAIAKEF), 246 to 279 (RRAYSNLGNAHIFLGRFDVAAEHYKKTLQLSRQL), 286 to 319 (AQACYSLGNTYTLLQDYERAAEYHLRHLVIAQEL), and 326 to 359 (GRACWSLGNAYVSMGSPAQALTFAKKHLQISQEI). The segment at 361–485 (DRNGELTARM…VRVQVPRTGI (125 aa)) is interaction with STK11/LKB1. Phosphoserine is present on S410. The residue at position 418 (R418) is an Omega-N-methylarginine. Residues 420–439 (PLDREQNGETHHTGDWRGPG) show a composition bias toward basic and acidic residues. The segment at 420 to 475 (PLDREQNGETHHTGDWRGPGRDSLPLPMRSRKYQEGPDAIERRPREGSHSPLDSAD) is disordered. 5 positions are modified to phosphoserine: S442, S467, S469, S490, and S491. Positions 451–467 (KYQEGPDAIERRPREGS) are enriched in basic and acidic residues. The 23-residue stretch at 493–515 (EECFFDLLSKFQSSRMDDQRCPL) folds into the GoLoco 1 domain. Residues 508-531 (MDDQRCPLEEGQAGAAEATAAPSV) are disordered. Residues 516 to 528 (EEGQAGAAEATAA) are compositionally biased toward low complexity. 2 positions are modified to phosphoserine: S543 and S567. 3 consecutive GoLoco domains span residues 546-568 (TEEFFDLIASSQSRRLDDQRASV), 594-616 (GDEFFNMLIKYQSSRIDDQRCPP), and 628-650 (DEDFFSLIQRVQAKRMDEQRVDL). Residues 644-673 (DEQRVDLAGSPEQEASGLPDPQQQCPPGAS) form a disordered region. Phosphoserine is present on S653. Positions 664 to 673 (PQQQCPPGAS) are enriched in polar residues.

Belongs to the GPSM family. In terms of assembly, interacts with GNAI1 and GNAI2 preferentially in their GDP-bound state. May also interact with GNAO1. Interacts with INSC/inscuteable and FRMPD1. Interacts with GNAI3. Interacts with STK11/LKB1 and MACF1. In terms of processing, phosphorylation regulates interaction with G(i/o) alpha. As to expression, expressed in neural progenitor cells (at protein level).

The protein resides in the cytoplasm. Its subcellular location is the cytosol. The protein localises to the endoplasmic reticulum membrane. It localises to the golgi apparatus membrane. It is found in the cell membrane. Functionally, guanine nucleotide dissociation inhibitor (GDI) which functions as a receptor-independent activator of heterotrimeric G-protein signaling. Keeps G(i/o) alpha subunit in its GDP-bound form thus uncoupling heterotrimeric G-proteins signaling from G protein-coupled receptors. Controls spindle orientation and asymmetric cell fate of cerebral cortical progenitors. May also be involved in macroautophagy in intestinal cells. May play a role in drug addiction. In Mus musculus (Mouse), this protein is G-protein-signaling modulator 1 (Gpsm1).